Reading from the N-terminus, the 390-residue chain is Mannitol-1-phosphate 5-dehydrogenase (390 aa).

Position 7–18 (7–18 (AVHFGGGNIGRG)) interacts with NAD(+). Residue lysine 216 is part of the active site.

It belongs to the mannitol dehydrogenase family. In terms of assembly, monomer.

The enzyme catalyses D-mannitol 1-phosphate + NAD(+) = beta-D-fructose 6-phosphate + NADH + H(+). Functionally, catalyzes the NAD(H)-dependent interconversion of D-fructose 6-phosphate and D-mannitol 1-phosphate in the mannitol metabolic pathway. Has a strong preference for NADH over NADPH. The protein is Mannitol-1-phosphate 5-dehydrogenase of Alternaria alternata (Alternaria rot fungus).